The primary structure comprises 363 residues: UDP-N-acetylglucosamine--N-acetylmuramyl-(pentapeptide) pyrophosphoryl-undecaprenol N-acetylglucosamine transferase (363 aa).

UDP-N-acetyl-alpha-D-glucosamine contacts are provided by residues 10–12, Asn-124, Ser-195, Ile-250, and Gln-295; that span reads TGG.

The protein belongs to the glycosyltransferase 28 family. MurG subfamily.

Its subcellular location is the cell membrane. The enzyme catalyses di-trans,octa-cis-undecaprenyl diphospho-N-acetyl-alpha-D-muramoyl-L-alanyl-D-glutamyl-meso-2,6-diaminopimeloyl-D-alanyl-D-alanine + UDP-N-acetyl-alpha-D-glucosamine = di-trans,octa-cis-undecaprenyl diphospho-[N-acetyl-alpha-D-glucosaminyl-(1-&gt;4)]-N-acetyl-alpha-D-muramoyl-L-alanyl-D-glutamyl-meso-2,6-diaminopimeloyl-D-alanyl-D-alanine + UDP + H(+). It participates in cell wall biogenesis; peptidoglycan biosynthesis. Functionally, cell wall formation. Catalyzes the transfer of a GlcNAc subunit on undecaprenyl-pyrophosphoryl-MurNAc-pentapeptide (lipid intermediate I) to form undecaprenyl-pyrophosphoryl-MurNAc-(pentapeptide)GlcNAc (lipid intermediate II). This chain is UDP-N-acetylglucosamine--N-acetylmuramyl-(pentapeptide) pyrophosphoryl-undecaprenol N-acetylglucosamine transferase, found in Listeria monocytogenes serotype 4b (strain CLIP80459).